A 469-amino-acid polypeptide reads, in one-letter code: ATP synthase subunit beta (469 aa).

153-160 is a binding site for ATP; sequence GGAGVGKT.

The protein belongs to the ATPase alpha/beta chains family. As to quaternary structure, F-type ATPases have 2 components, CF(1) - the catalytic core - and CF(0) - the membrane proton channel. CF(1) has five subunits: alpha(3), beta(3), gamma(1), delta(1), epsilon(1). CF(0) has three main subunits: a(1), b(2) and c(9-12). The alpha and beta chains form an alternating ring which encloses part of the gamma chain. CF(1) is attached to CF(0) by a central stalk formed by the gamma and epsilon chains, while a peripheral stalk is formed by the delta and b chains.

It localises to the cell inner membrane. The catalysed reaction is ATP + H2O + 4 H(+)(in) = ADP + phosphate + 5 H(+)(out). Produces ATP from ADP in the presence of a proton gradient across the membrane. The catalytic sites are hosted primarily by the beta subunits. The sequence is that of ATP synthase subunit beta from Pseudothermotoga lettingae (strain ATCC BAA-301 / DSM 14385 / NBRC 107922 / TMO) (Thermotoga lettingae).